A 349-amino-acid chain; its full sequence is Small ribosomal subunit biogenesis GTPase RsgA (349 aa).

The span at 1 to 11 shows a compositional bias: basic residues; it reads MSKKKLSKGQQ. The tract at residues 1-29 is disordered; that stretch reads MSKKKLSKGQQRRVSANHQRRLKKTESKV. Residues 102-272 form the CP-type G domain; it reads HSVLTRPDYY…VIDSPGVREF (171 aa). GTP contacts are provided by residues 158–161 and 212–220; these read NKID and GQSGVGKSS. 4 residues coordinate Zn(2+): Cys-296, Cys-301, His-303, and Cys-309.

The protein belongs to the TRAFAC class YlqF/YawG GTPase family. RsgA subfamily. In terms of assembly, monomer. Associates with 30S ribosomal subunit, binds 16S rRNA. It depends on Zn(2+) as a cofactor.

The protein resides in the cytoplasm. One of several proteins that assist in the late maturation steps of the functional core of the 30S ribosomal subunit. Helps release RbfA from mature subunits. May play a role in the assembly of ribosomal proteins into the subunit. Circularly permuted GTPase that catalyzes slow GTP hydrolysis, GTPase activity is stimulated by the 30S ribosomal subunit. This chain is Small ribosomal subunit biogenesis GTPase RsgA, found in Pectobacterium atrosepticum (strain SCRI 1043 / ATCC BAA-672) (Erwinia carotovora subsp. atroseptica).